The following is a 155-amino-acid chain: MGISYSVEADPDTTAKAMLRERQMSFKHSKAIAREIKGKTAGEAVDYLEAVIEGDQPVPFKQHNSGVGHKSKVDGWDAGRYPEKASKAFLDLLENAVGNADHQGFDGEAMTIKHVAAHKVGEQQGRKPRAMGRASAWNSPQVDVELILEEPEVED.

The protein belongs to the universal ribosomal protein uL22 family. Part of the 50S ribosomal subunit. Contacts the macrolide antibiotic tylosin in the polypeptide exit tunnel.

Functionally, this protein binds specifically to 23S rRNA. It makes multiple contacts with different domains of the 23S rRNA in the assembled 50S subunit and ribosome. Contacts all 6 domains of the 23S rRNA, helping stabilize their relative orientation. An extended beta-hairpin in the C-terminus forms part of the polypeptide exit tunnel, in which it helps forms a bend with protein L4, while most of the rest of the protein is located at the polypeptide exit tunnel on the outside of the subunit. This Haloarcula marismortui (strain ATCC 43049 / DSM 3752 / JCM 8966 / VKM B-1809) (Halobacterium marismortui) protein is Large ribosomal subunit protein uL22.